The primary structure comprises 510 residues: NAD(P)H-quinone oxidoreductase subunit 2 A, chloroplastic (510 aa).

Helical transmembrane passes span 24-44 (LLLF…GLIL), 59-79 (WFYF…LFRW), 99-119 (IFQF…VEYI), 124-144 (MAIT…MFLC), 149-169 (LITI…LSGY), 183-203 (YLLM…WLYG), 229-249 (ISIA…PAPF), 295-315 (WHLL…LIAI), 323-343 (MLAY…IVGD), 347-367 (GYAS…GTFA), 395-415 (ALSS…AGFF), 418-438 (LHLF…IGLL), and 484-504 (MIVC…IIAI).

This sequence belongs to the complex I subunit 2 family. In terms of assembly, NDH is composed of at least 16 different subunits, 5 of which are encoded in the nucleus.

The protein localises to the plastid. It is found in the chloroplast thylakoid membrane. It carries out the reaction a plastoquinone + NADH + (n+1) H(+)(in) = a plastoquinol + NAD(+) + n H(+)(out). It catalyses the reaction a plastoquinone + NADPH + (n+1) H(+)(in) = a plastoquinol + NADP(+) + n H(+)(out). Functionally, NDH shuttles electrons from NAD(P)H:plastoquinone, via FMN and iron-sulfur (Fe-S) centers, to quinones in the photosynthetic chain and possibly in a chloroplast respiratory chain. The immediate electron acceptor for the enzyme in this species is believed to be plastoquinone. Couples the redox reaction to proton translocation, and thus conserves the redox energy in a proton gradient. The chain is NAD(P)H-quinone oxidoreductase subunit 2 A, chloroplastic from Amborella trichopoda.